Reading from the N-terminus, the 980-residue chain is MADKGCEAAQSKDSSAPGSGEPRPKTEKELERERQKAAKLEKYHAKLAAKKAKEEARKPKLDKKAKIASPVAEYVEKTTPGEKKVLQDLDSPALKSYNPKAVESAWYDWWVKSGFFEPEFGPDGKPKKEGVFVITSPPPNVTGALHIGHALTIAIQDSLARWNRMLGKTVLFLGGFDHAGLSTQSVVEKKLWYTQKKTRHDYPRDKFVDIVWEWKEEYHNRIKNQMSRLGGSFDWTREAFTMDENLSRAVVETFVRLHEENIIYRANRLVNWCTALQTTLSNLEVENVDVPGRTLLKVPGYDEPVEVGVLTSIAYAVEGSDERIVIATTRPETLLGDTAVAVHPQDPRYKHLHGKFVKHPFCNRSIPIICDDIIVDMEFGTGAVKITPAHDPNDYEVGKRHNLEFINIFTDDGLLNENCGEFAGMKRFTARVKVVERLKELGLFVGTKENPMVIPLCGKTSDIIEPVMKPQWWVNQKEMAAAAAEVVKSGEIEIAPDMSRREFIRWMENIQDWCISRQLWWGHRIPAYFVNLADEPSQDRSEGRYWVTGRTLEQAEEKAKAAFPGKSFTLEQDEDVLDTWFSSGLWPFSTLGWPKDTSDYENFYPTTLMETGWDILFFWIARMVMLGLKLTGKIPFKRVFCHALVRDAQGRKMSKSLGNVVDPIDVIEGISLQALHDKLLVGNLDSREVEKAKKGQRLSYPKGIPQCGTDALRFTLCSLTTGGRDLNLDILRVEGYRKFCNKLYNATKFALGRLGSNFVPNKTADLTGNESLVEKWIFHRLNIAAAAMNKNMEEMNFLQATSAVHQFWLYELCDVYIENSKYLLSDGTEVQQESAKQTLYTVLDNALRLMHPFMPYVTEEMWQRLPRRPGDKTQTIVKAAFPVERVDYSNEIAAKYYESIITVVHSTRSMMAENGIKSDAVVYIHPDEEHSKLITSESASIQSLIKKCKTLSIVDNTFDSDKCVKNEVLEGSTIFLERNN.

The interval 1-40 is disordered; the sequence is MADKGCEAAQSKDSSAPGSGEPRPKTEKELERERQKAAKL. The span at 22-40 shows a compositional bias: basic and acidic residues; the sequence is PRPKTEKELERERQKAAKL. A 'HIGH' region motif is present at residues 139–149; sequence PNVTGALHIGH. Positions 652–656 match the 'KMSKS' region motif; that stretch reads KMSKS. Lysine 655 contacts ATP.

Belongs to the class-I aminoacyl-tRNA synthetase family.

It is found in the cytoplasm. It catalyses the reaction tRNA(Val) + L-valine + ATP = L-valyl-tRNA(Val) + AMP + diphosphate. This Schizosaccharomyces pombe (strain 972 / ATCC 24843) (Fission yeast) protein is Valine--tRNA ligase (vas2).